We begin with the raw amino-acid sequence, 265 residues long: Hydroxyethylthiazole kinase (265 aa).

Residue methionine 50 coordinates substrate. ATP is bound by residues arginine 125 and threonine 171. Position 198 (glycine 198) interacts with substrate.

This sequence belongs to the Thz kinase family. The cofactor is Mg(2+).

It catalyses the reaction 5-(2-hydroxyethyl)-4-methylthiazole + ATP = 4-methyl-5-(2-phosphooxyethyl)-thiazole + ADP + H(+). The protein operates within cofactor biosynthesis; thiamine diphosphate biosynthesis; 4-methyl-5-(2-phosphoethyl)-thiazole from 5-(2-hydroxyethyl)-4-methylthiazole: step 1/1. Its function is as follows. Catalyzes the phosphorylation of the hydroxyl group of 4-methyl-5-beta-hydroxyethylthiazole (THZ). This Salmonella paratyphi C (strain RKS4594) protein is Hydroxyethylthiazole kinase.